The sequence spans 275 residues: NH(3)-dependent NAD(+) synthetase (275 aa).

50 to 57 (GISGGVDS) is an ATP binding site. Asp56 provides a ligand contact to Mg(2+). Residue Arg147 participates in deamido-NAD(+) binding. Thr167 contacts ATP. Glu172 contributes to the Mg(2+) binding site. Deamido-NAD(+)-binding residues include Lys180 and Asp187. Lys196 and Thr218 together coordinate ATP. 267-268 (HK) is a deamido-NAD(+) binding site.

The protein belongs to the NAD synthetase family. As to quaternary structure, homodimer.

It carries out the reaction deamido-NAD(+) + NH4(+) + ATP = AMP + diphosphate + NAD(+) + H(+). It functions in the pathway cofactor biosynthesis; NAD(+) biosynthesis; NAD(+) from deamido-NAD(+) (ammonia route): step 1/1. Functionally, catalyzes the ATP-dependent amidation of deamido-NAD to form NAD. Uses ammonia as a nitrogen source. The polypeptide is NH(3)-dependent NAD(+) synthetase (Pseudomonas syringae pv. tomato (strain ATCC BAA-871 / DC3000)).